Here is a 283-residue protein sequence, read N- to C-terminus: Circadian clock oscillator protein KaiA (283 aa).

Residues 1–146 (MAQSTALTIC…LFRLPALKES (146 aa)) are psR domain, not required to form KaiA:KaiB:KaiC complex, or for a full KaiC phosphorylation cycle. The 161-residue stretch at 3–163 (QSTALTICGL…RLSQKLKERL (161 aa)) folds into the KaiA N-terminal domain. The flexible linker stretch occupies residues 164–172 (GYLGVYYKR). The region spanning 173–281 (DTAFFFRRMS…CEMYRRSIPR (109 aa)) is the KaiA C-terminal domain.

It belongs to the KaiA family. In terms of assembly, homodimer. The KaiABC complex composition changes during the circadian cycle to control KaiC phosphorylation. Complexes KaiC(6), KaiA(2-4):KaiC(6), KaiB(6):KaiC(6) and KaiC(6):KaiB(6):KaiA(12) are among the most important forms, many form cooperatively. Binds to KaiB and KaiC, the N-terminus (pseudoreceiver domain PsR) is not required for either interaction. 1 KaiB binds to one subunit of the KaiA homodimer. KaiA and CikA bind to the same region of the KaiB(fs) form and therefore compete.

Key component of the KaiABC oscillator complex, which constitutes the main circadian regulator in cyanobacteria. Complex composition changes during the circadian cycle to control KaiC phosphorylation. KaiA stimulates KaiC autophosphorylation, while KaiB sequesters KaiA, leading to KaiC autodephosphorylation. KaiA binding to the KaiC CII domain during the subjective day yields KaiA(2-4):KaiC(6) complexes which stimulate KaiC autophosphorylation. Phospho-Ser-431 KaiC accumulation triggers binding of KaiB during the subjective night to form the KaiB(6):KaiC(6) complex, leading to changes in the output regulators CikA and SasA. KaiB(6):KaiC(6) formation exposes a site for KaiA binding on KaiB that sequesters KaiA from KaiC's CII domain, making the KaiC(6):KaiB(6):KaiA(12) complex resulting in KaiC autodephosphorylation. Complete dephosphorylation of KaiC leads to dissociation of KaiA(2):KaiB(1), completing 1 cycle of the Kai oscillator. Formation of the KaiB:KaiC complex is promoted by KaiA, helping switch KaiC from its autophosphorylation to autodephosphatase function. In terms of biological role, binds oxidized quinones via the N-terminal PsR domain, allowing it to sense redox changes and possibly mediate clock input. The protein is Circadian clock oscillator protein KaiA of Thermosynechococcus vestitus (strain NIES-2133 / IAM M-273 / BP-1).